The chain runs to 262 residues: Ubiquitin thioesterase otubain-like (262 aa).

The 199-residue stretch at 64-262 (KFIRRTRPDG…PGHYDILYPN (199 aa)) folds into the OTU domain. Asp-72 is an active-site residue. Cys-75 functions as the Nucleophile in the catalytic mechanism. Position 168 (Ile-168) interacts with substrate. Residue His-255 is part of the active site.

The protein belongs to the peptidase C65 family.

It catalyses the reaction Thiol-dependent hydrolysis of ester, thioester, amide, peptide and isopeptide bonds formed by the C-terminal Gly of ubiquitin (a 76-residue protein attached to proteins as an intracellular targeting signal).. In terms of biological role, possible hydrolase that can remove conjugated ubiquitin from proteins in vitro and may therefore play an important regulatory role at the level of protein turnover by preventing degradation. This is Ubiquitin thioesterase otubain-like from Drosophila melanogaster (Fruit fly).